Consider the following 264-residue polypeptide: MDIFDAIVLGIIQGLTEFLPVSSSGHLELGKAILGDTSLPEESLLFTVVLHFATALSTLVVFRKDVFEIFSGLLKFKWNEETQFSLKIIISMLPAVIVGLLFEEQLEALFGGNILFVGFMLLITALLLWLADKAKDTGKKVSYRNAFIIGVSQAIAMLPGISRSGATISTSVLLGNDKTKAARFSFLMVVPLIFGKIAKDLMSGELMASSTDFSILATGFIAAFLAGLVACTWMISLVKKSKLSWFAIYCFVVGLAAIIFAYAQ.

7 helical membrane-spanning segments follow: residues 42–62 (ESLL…LVVF), 82–102 (TQFS…GLLF), 109–129 (LFGG…LLLW), 146–166 (AFII…RSGA), 184–204 (FSFL…LMSG), 215–235 (ILAT…TWMI), and 243–263 (LSWF…FAYA).

This sequence belongs to the UppP family.

It is found in the cell membrane. It catalyses the reaction di-trans,octa-cis-undecaprenyl diphosphate + H2O = di-trans,octa-cis-undecaprenyl phosphate + phosphate + H(+). In terms of biological role, catalyzes the dephosphorylation of undecaprenyl diphosphate (UPP). Confers resistance to bacitracin. This is Undecaprenyl-diphosphatase from Christiangramia forsetii (strain DSM 17595 / CGMCC 1.15422 / KT0803) (Gramella forsetii).